The chain runs to 460 residues: Elongation factor 1-alpha (460 aa).

Gly2 is subject to N,N,N-trimethylglycine. Position 3 is an N6,N6-dimethyllysine; alternate (Lys3). Lys3 is modified (N6-methyllysine; alternate). Residues 6 to 241 (KTHINLVVIG…DAIDPPTRPT (236 aa)) form the tr-type G domain. A G1 region spans residues 15–22 (GHVDSGKS). 15–22 (GHVDSGKS) lines the GTP pocket. Lys31 carries the post-translational modification N6-methyllysine. The segment at 71–75 (GITID) is G2. Position 80 is an N6,N6,N6-trimethyllysine (Lys80). Residues 92–95 (DAPG) are G3. GTP is bound by residues 92 to 96 (DAPGH) and 154 to 157 (NKMD). Residues 154 to 157 (NKMD) form a G4 region. The tract at residues 193-195 (SGF) is G5. Residue Lys317 is modified to N6,N6-dimethyllysine; alternate. Lys317 is modified (N6-methyllysine; alternate). The residue at position 391 (Lys391) is an N6-methyllysine.

The protein belongs to the TRAFAC class translation factor GTPase superfamily. Classic translation factor GTPase family. EF-Tu/EF-1A subfamily.

Its subcellular location is the cytoplasm. Its function is as follows. This protein promotes the GTP-dependent binding of aminoacyl-tRNA to the A-site of ribosomes during protein biosynthesis. The polypeptide is Elongation factor 1-alpha (TEF) (Coccidioides immitis (strain RS) (Valley fever fungus)).